We begin with the raw amino-acid sequence, 500 residues long: Beta-xylosidase (500 aa).

Glutamate 160 acts as the Proton donor in catalysis. The Nucleophile role is filled by glutamate 277.

Belongs to the glycosyl hydrolase 39 family.

The enzyme catalyses Hydrolysis of (1-&gt;4)-beta-D-xylans, to remove successive D-xylose residues from the non-reducing termini.. The protein is Beta-xylosidase (xynB) of Thermoanaerobacterium saccharolyticum (strain DSM 8691 / JW/SL-YS485).